A 42-amino-acid chain; its full sequence is Large ribosomal subunit protein bL36 (42 aa).

It belongs to the bacterial ribosomal protein bL36 family.

In Ehrlichia canis (strain Jake), this protein is Large ribosomal subunit protein bL36.